A 305-amino-acid chain; its full sequence is Oxygen-dependent coproporphyrinogen-III oxidase (305 aa).

S98 lines the substrate pocket. A divalent metal cation-binding residues include H102 and H112. The active-site Proton donor is H112. 114–116 lines the substrate pocket; sequence NVR. H151 and H181 together coordinate a divalent metal cation. An important for dimerization region spans residues 246-281; the sequence is YVEFNLVYDRGTLFGLQSGGRTESILMSMPPLARWE. Position 264 to 266 (264 to 266) interacts with substrate; sequence GGR.

The protein belongs to the aerobic coproporphyrinogen-III oxidase family. In terms of assembly, homodimer. A divalent metal cation is required as a cofactor.

Its subcellular location is the cytoplasm. It carries out the reaction coproporphyrinogen III + O2 + 2 H(+) = protoporphyrinogen IX + 2 CO2 + 2 H2O. Its pathway is porphyrin-containing compound metabolism; protoporphyrin-IX biosynthesis; protoporphyrinogen-IX from coproporphyrinogen-III (O2 route): step 1/1. Its function is as follows. Involved in the heme biosynthesis. Catalyzes the aerobic oxidative decarboxylation of propionate groups of rings A and B of coproporphyrinogen-III to yield the vinyl groups in protoporphyrinogen-IX. The sequence is that of Oxygen-dependent coproporphyrinogen-III oxidase from Vibrio atlanticus (strain LGP32) (Vibrio splendidus (strain Mel32)).